We begin with the raw amino-acid sequence, 346 residues long: MVDWELMKKIIESPGVSGYEHLGIRDLVVDILKDVADEVKIDKLGNVIAHFKGSAPKVMVAAHMDKIGLMVNHIDKDGYLRVVPIGGVLPETLIAQKIRFFTEKGERYGVVGVLPPHLRREAKDQGGKIDWDSIIVDVGASSREEAEEMGFRIGTIGEFAPNFTRLSEHRFATPYLDDRICLYAMIEAARQLGEHEADIYIVASVQEEIGLRGARVASFAIDPEVGIAMDVTFAKQPNDKGKIVPELGKGPVMDVGPNINPKLRQFADEVAKKYEIPLQVEPSPRPTGTDANVMQINREGVATAVLSIPIRYMHSQVELADARDVDNTIKLAKALLEELKPMDFTP.

Residues H63 and D177 each contribute to the Zn(2+) site. E207 (proton acceptor) is an active-site residue. Zn(2+) contacts are provided by E208, D230, and H314.

Homotetramer. Zn(2+) is required as a cofactor.

The enzyme catalyses Preferentially, release of N-terminal lysine.. Its function is as follows. Hydrolyzes di-, tri- and tetrapeptides with a lysine as the N-terminal amino acid and with Gly, Lys, Ala, Phe or Glu in the second position. The chain is Lysyl aminopeptidase from Pyrococcus furiosus (strain ATCC 43587 / DSM 3638 / JCM 8422 / Vc1).